Consider the following 238-residue polypeptide: MKLPNEIEEYLVSRNFSENTRSNYYYDLVYLQAFFEDKSVTQEALELYKHQLSKLSPAAQRRKISSANQYFLFLYENKKINQFFKIKQVVQKKTQSSESYHPMIKEFPEFYGPLSCPGQFLALLILEFGLNFAEIQKLKWENFNWNFKYLTIEKAGIKRVLPIREKFAIRVKAIKNADELFAKSRQFLYTELKKFTNYSSKEIREQYILHQVKAGKTIYELANLLGLSTITALEKYYR.

A Core-binding (CB) domain is found at 1-75 (MKLPNEIEEY…SANQYFLFLY (75 aa)). One can recognise a Tyr recombinase domain in the interval 90-238 (VQKKTQSSES…TITALEKYYR (149 aa)). Active-site residues include lysine 154 and arginine 204. The active-site O-(3'-phospho-DNA)-tyrosine intermediate is the tyrosine 236.

It belongs to the 'phage' integrase family. XerD-like subfamily.

It localises to the cytoplasm. Functionally, putative tyrosine recombinase. Not involved in the cutting and rejoining of the recombining DNA molecules on dif(SL) site. This chain is Tyrosine recombinase XerD-like, found in Lactococcus lactis subsp. cremoris (strain SK11).